The sequence spans 337 residues: Sideroflexin-4 (337 aa).

Ser2 carries the N-acetylserine modification. Transmembrane regions (helical) follow at residues 111 to 131, 133 to 153, and 165 to 185; these read AAFL…LKGI, SVIL…SING, and SLLM…PQFV. Position 197 is an N6-acetyllysine (Lys197). Helical transmembrane passes span 251 to 271 and 293 to 313; these read ASRI…TYFF and VLAM…IGQI.

The protein belongs to the sideroflexin family.

It is found in the mitochondrion inner membrane. Mitochondrial amino-acid transporter. Does not act as a serine transporter: not able to mediate transport of serine into mitochondria. The chain is Sideroflexin-4 from Homo sapiens (Human).